The primary structure comprises 85 residues: MFLYRLICLFILICIITVDISTSEEISDGVEDKNNNPAIPREPSKITNGEEKTKEKSKLQVVEITEPLHACTSRDIWISGSTPCF.

A signal peptide spans 1-23 (MFLYRLICLFILICIITVDISTS). The cysteines at positions 71 and 84 are disulfide-linked.

In terms of tissue distribution, highly expressed in the venom apparatus, and weakly expressed in residual body.

The protein resides in the secreted. Its function is as follows. Endoparasitoid venom toxin that exhibits insecticidal activity against Tenebrio molitor pupae. Impacts genes related to immune response, environmental information processing, metabolism, and response to external stimuli in T.molitor, suggesting its involvement in the intricate parasitoid wasp-host interaction. In Aphidius gifuensis (Parasitoid wasp), this protein is Insecticidal toxin Vn1.